We begin with the raw amino-acid sequence, 180 residues long: Secreted RxLR effector protein 5 (180 aa).

A signal peptide spans 1-24 (MRFYYTLLATAAALLVHSDALSAA). The RxLR-dEER signature appears at 44–60 (RFLRRHTDSETTDNEER).

This sequence belongs to the RxLR effector family.

It localises to the secreted. The protein resides in the host cell. Secreted effector that partially suppresses elicitor-induced cell death in host and enhances virulence of P.parasitica. This chain is Secreted RxLR effector protein 5, found in Phytophthora nicotianae (Potato buckeye rot agent).